The chain runs to 164 residues: ATP synthase subunit b (164 aa).

Residues 10-32 (SAAMLMLFVLMVYFLNKFLYTPF) form a helical membrane-spanning segment.

The protein belongs to the ATPase B chain family. As to quaternary structure, F-type ATPases have 2 components, F(1) - the catalytic core - and F(0) - the membrane proton channel. F(1) has five subunits: alpha(3), beta(3), gamma(1), delta(1), epsilon(1). F(0) has three main subunits: a(1), b(2) and c(10-14). The alpha and beta chains form an alternating ring which encloses part of the gamma chain. F(1) is attached to F(0) by a central stalk formed by the gamma and epsilon chains, while a peripheral stalk is formed by the delta and b chains.

It localises to the cell inner membrane. In terms of biological role, f(1)F(0) ATP synthase produces ATP from ADP in the presence of a proton or sodium gradient. F-type ATPases consist of two structural domains, F(1) containing the extramembraneous catalytic core and F(0) containing the membrane proton channel, linked together by a central stalk and a peripheral stalk. During catalysis, ATP synthesis in the catalytic domain of F(1) is coupled via a rotary mechanism of the central stalk subunits to proton translocation. Component of the F(0) channel, it forms part of the peripheral stalk, linking F(1) to F(0). This is ATP synthase subunit b from Thermotoga maritima (strain ATCC 43589 / DSM 3109 / JCM 10099 / NBRC 100826 / MSB8).